The sequence spans 339 residues: DNA-directed RNA polymerase subunit alpha (339 aa).

The alpha N-terminal domain (alpha-NTD) stretch occupies residues 1–233 (MVREEVAGST…DLFLPFLHAE (233 aa)). Residues 266-339 (GIPLNCIFID…MDLLKNKLSF (74 aa)) are alpha C-terminal domain (alpha-CTD).

It belongs to the RNA polymerase alpha chain family. As to quaternary structure, in plastids the minimal PEP RNA polymerase catalytic core is composed of four subunits: alpha, beta, beta', and beta''. When a (nuclear-encoded) sigma factor is associated with the core the holoenzyme is formed, which can initiate transcription.

Its subcellular location is the plastid. The protein localises to the chloroplast. It catalyses the reaction RNA(n) + a ribonucleoside 5'-triphosphate = RNA(n+1) + diphosphate. DNA-dependent RNA polymerase catalyzes the transcription of DNA into RNA using the four ribonucleoside triphosphates as substrates. The protein is DNA-directed RNA polymerase subunit alpha of Agrostis stolonifera (Creeping bentgrass).